The following is a 783-amino-acid chain: Ras and Rab interactor 1 (783 aa).

Met-1 carries the N-acetylmethionine modification. A disordered region spans residues 1 to 53 (MESPGESGAGSPGAPSPSSFTTGHLAREKPAQDPLYDVPNASGGQAGGPQRPG). Residues Ser-3 and Ser-16 each carry the phosphoserine modification. Tyr-36 is subject to Phosphotyrosine; by ABL1 and ABL2. The SH2 domain occupies 69–163 (WLQLQANAAA…ILLLPLQLPR (95 aa)). Phosphoserine occurs at positions 210, 258, 333, and 337. 2 disordered regions span residues 250–282 (STETSSPLSPPAVPPPPVPVLPGAVPSQTERLP) and 295–342 (YRVP…HLGR). Positions 257 to 269 (LSPPAVPPPPVPV) are enriched in pro residues. Residues 294-727 (GYRVPAGSGP…GSGQSEARSR (434 aa)) are ras and 14-3-3 protein binding region. The segment covering 317 to 334 (GSPSSSEEEGVPGSRGSP) has biased composition (low complexity). Ser-351 carries the post-translational modification Phosphoserine; by PKD/PRKD1. Positions 456 to 598 (LAADGSLGRL…LSGLGQAHTL (143 aa)) constitute a VPS9 domain. Phosphoserine occurs at positions 609 and 611. One can recognise a Ras-associating domain in the interval 624–706 (FQHLLRVAYQ…GYLVYRRAEW (83 aa)). Arg-692 is modified (omega-N-methylarginine). Residues 709–783 (TQGAVTEEEG…EAEGSRAAEE (75 aa)) are disordered. The span at 762 to 772 (QAQEGPAQPGE) shows a compositional bias: low complexity.

The protein belongs to the RIN (Ras interaction/interference) family. As to quaternary structure, interacts with the GTP-bound form of Ras proteins (NRAS, HRAS and KRAS). This interaction prevents the association between RAF1 and Ras. Interacts with 14-3-3 proteins YWHAB, YWHAE and YWHAZ when phosphorylated on Ser-351. Interacts with the SH3 domain of ABL1 and ABL2. Interacts with RAB5A. The interaction with Ras is probably regulated and antagonized by the interaction with 14-3-3 proteins. The interaction with 14-3-3 proteins is regulated by phosphorylation on Ser-351. Phosphorylated on tyrosine residues by ABL1 and ABL2. Phosphorylation at Ser-351 by PRKD1 induces interaction with 14-3-3 proteins. In terms of tissue distribution, expressed in all tissues examined with high levels in brain, placenta and pancreas.

The protein localises to the cytoplasm. It localises to the membrane. Its subcellular location is the cytoskeleton. Its function is as follows. Ras effector protein, which may serve as an inhibitory modulator of neuronal plasticity in aversive memory formation. Can affect Ras signaling at different levels. First, by competing with RAF1 protein for binding to activated Ras. Second, by enhancing signaling from ABL1 and ABL2, which regulate cytoskeletal remodeling. Third, by activating RAB5A, possibly by functioning as a guanine nucleotide exchange factor (GEF) for RAB5A, by exchanging bound GDP for free GTP, and facilitating Ras-activated receptor endocytosis. The sequence is that of Ras and Rab interactor 1 (RIN1) from Homo sapiens (Human).